The following is a 471-amino-acid chain: Trehalose-binding lipoprotein LpqY (471 aa).

A signal peptide spans M1 to A28. C29 is lipidated: N-palmitoyl cysteine. C29 carries the S-diacylglycerol cysteine lipid modification. Alpha,alpha-trehalose is bound by residues N45, E46, Q79, D100, N154, Y198, W279, Y281, G354, and R424. A disulfide bond links C57 and C375.

It belongs to the bacterial solute-binding protein 1 family. In terms of assembly, monomer. The complex is composed of two ATP-binding proteins (SugC), two transmembrane proteins (SugA and SugB) and a solute-binding protein (LpqY).

It is found in the cell inner membrane. In terms of biological role, part of the ABC transporter complex LpqY-SugA-SugB-SugC, which is highly specific for uptake of trehalose. Involved in the recycling of extracellular trehalose released from trehalose-containing molecules synthesized by M.thermoresistibile. Trehalose uptake is essential for virulence. Binds deuterated trehalose with similar high affinity to trehalose, trehalose analogs including galactotrehalose, 4-azido-4-deoxy-trehalose, 6-azido-6-deoxy-trehalose, 3-azido-3-deoxy-trehalose and mannotrehalose in the order of decreasing affinity, respectively, and 2-azido-2-deoxy-trehalose and kojibiose (alpha1,2-glycosidic bond) with very low affinity. Does not recognize single glucose, 6-amino-6-deoxy-trehalose, trehalose-6-phosphate, nigerose (alpha1,3-glycosidic bond), maltose (alpha1,4-glycosidic bond), isomaltose (alpha1,6-glycosidic bond) or glycerophosphocholine. Decreased recognition of alpha,beta-trehalose and almost no recognition of beta,beta-trehalose. Substrate specificity indicates a strict requirement for an alpha1,1-linked disaccharide. In Mycolicibacterium thermoresistibile (strain ATCC 19527 / DSM 44167 / CIP 105390 / JCM 6362 / NCTC 10409 / 316) (Mycobacterium thermoresistibile), this protein is Trehalose-binding lipoprotein LpqY.